A 104-amino-acid chain; its full sequence is L-rhamnose mutarotase (104 aa).

Tyrosine 18 is a binding site for substrate. The active-site Proton donor is the histidine 22. Residues tyrosine 41 and 76 to 77 (WW) contribute to the substrate site.

This sequence belongs to the rhamnose mutarotase family. In terms of assembly, homodimer.

The protein localises to the cytoplasm. It carries out the reaction alpha-L-rhamnose = beta-L-rhamnose. The protein operates within carbohydrate metabolism; L-rhamnose metabolism. Its function is as follows. Involved in the anomeric conversion of L-rhamnose. This chain is L-rhamnose mutarotase, found in Escherichia coli O127:H6 (strain E2348/69 / EPEC).